The following is a 750-amino-acid chain: Pesticidal crystal protein Cry11Bb (750 aa).

Residues 672–750 (QGYNDNYNQN…NYNQNTSSGV (79 aa)) form a disordered region.

It belongs to the delta endotoxin family.

Its function is as follows. Promotes colloidosmotic lysis by binding to the midgut epithelial cells of mosquito larvae such as Aedes aegypti, Anopheles albimanus and Culex quinquefasciatus. This Bacillus thuringiensis subsp. medellin protein is Pesticidal crystal protein Cry11Bb (cry11Bb).